The primary structure comprises 451 residues: BSD domain-containing protein 1 (451 aa).

The BSD domain occupies 146-198 (WLSRFSLEEKKGEIAELLATSPSIRALYTKMVPAAVSHSEFWQRYFYKVHRLE). Disordered stretches follow at residues 252–296 (SAAL…SLVT) and 309–424 (LQTG…DLDM). A compositionally biased stretch (low complexity) spans 275–295 (PPELAPAEGSPSESSESVSLV). The span at 309–320 (LQTGVQPSGNRD) shows a compositional bias: polar residues. Positions 365 to 388 (KEVESKAQGRTETLKEEGPTDLRV) are enriched in basic and acidic residues. Over residues 392 to 411 (NSDSGKSTPSNNGKKGSSTD) the composition is skewed to polar residues. The segment covering 412–424 (ISEDWEKDFDLDM) has biased composition (acidic residues).

This chain is BSD domain-containing protein 1 (BSDC1), found in Gallus gallus (Chicken).